We begin with the raw amino-acid sequence, 1100 residues long: Tyrosine-protein kinase JAK3 (1100 aa).

Residues 1-223 form a cytokine/interferon/growth hormone receptors region; the sequence is MAPPSEETPL…RRTVVQALRR (223 aa). S17 carries the phosphoserine modification. An FERM domain is found at 24–353; that stretch reads GALHVLLPPR…GYFRLICDSR (330 aa). The SH2; atypical domain occupies 372 to 472; that stretch reads LCHGPITLDF…GTALNLTSCC (101 aa). Positions 517 to 777 constitute a Protein kinase 1 domain; it reads LEWHENLGHG…AILRDLNGLI (261 aa). Phosphotyrosine; by autocatalysis is present on Y781. The region spanning 818–1091 is the Protein kinase 2 domain; it reads LKYISLLGKG…PAFDTLSPQL (274 aa). Residues 824 to 832 and K851 contribute to the ATP site; that span reads LGKGNFGSV. A phosphotyrosine mark is found at Y900 and Y935. The active-site Proton acceptor is the D945. Phosphotyrosine; by autocatalysis occurs at positions 976 and 977.

The protein belongs to the protein kinase superfamily. Tyr protein kinase family. JAK subfamily. Interacts with STAM2 and MYO18A. Interacts with SHB. Interacts with CD69. Autophosphorylated, leading to regulate its activity. IL2 promotes phosphorylation on tyrosine residues, including autophosphorylation on Tyr-781. Dephosphorylation of Tyr-976 and Tyr-977 by PTPN2 negatively regulates cytokine-mediated signaling. In terms of tissue distribution, in contrast with the ubiquitous expression of the other JAKs, JAK3 is predominantly expressed in hematopoietic tissues.

The protein resides in the endomembrane system. The protein localises to the cytoplasm. It catalyses the reaction L-tyrosyl-[protein] + ATP = O-phospho-L-tyrosyl-[protein] + ADP + H(+). In terms of biological role, non-receptor tyrosine kinase involved in various processes such as cell growth, development, or differentiation. Mediates essential signaling events in both innate and adaptive immunity and plays a crucial role in hematopoiesis during T-cells development. In the cytoplasm, plays a pivotal role in signal transduction via its association with type I receptors sharing the common subunit gamma such as IL2R, IL4R, IL7R, IL9R, IL15R and IL21R. Following ligand binding to cell surface receptors, phosphorylates specific tyrosine residues on the cytoplasmic tails of the receptor, creating docking sites for STATs proteins. Subsequently, phosphorylates the STATs proteins once they are recruited to the receptor. Phosphorylated STATs then form homodimer or heterodimers and translocate to the nucleus to activate gene transcription. For example, upon IL2R activation by IL2, JAK1 and JAK3 molecules bind to IL2R beta (IL2RB) and gamma chain (IL2RG) subunits inducing the tyrosine phosphorylation of both receptor subunits on their cytoplasmic domain. Then, STAT5A and STAT5B are recruited, phosphorylated and activated by JAK1 and JAK3. Once activated, dimerized STAT5 translocates to the nucleus and promotes the transcription of specific target genes in a cytokine-specific fashion. This is Tyrosine-protein kinase JAK3 from Rattus norvegicus (Rat).